A 156-amino-acid chain; its full sequence is Phytohormone-binding protein (156 aa).

Gibberellin A3-binding residues include Gln22, Gln68, and Thr141.

The protein belongs to the BetVI family.

Its function is as follows. Binds gibberellin A3 (GA3) in vitro. The polypeptide is Phytohormone-binding protein (Medicago truncatula (Barrel medic)).